The primary structure comprises 325 residues: MAATVRCFGRVLIHHQRCSLATVTSQTSLYPCCIYVPVPNRHFAAAAKPAKKTKKGTKEKASNEKKDDIEKIKSYPFMEGEPEDDVYLKRLYPRQIYEVEKAVNLLKKFQVLDFTNPKQGVYLDLTLDMTLGKKKKVEPFASVLSLPYPFISEMSKVAVFTGNASEIKIAEENGAAFAGGTNLIQKILDDEIQADFYIAVPEIMPELNPLRKKLKTRFPKFNRNSVGRDIPKMLELFKTGLEIKVDEERENFLETKIATLDMPSDQIAANLQAVINEVCRQRPLNLGPFVVRAFLRSSTSEGLLLKIEPLLPKEGETKESDKKAV.

Residues methionine 1 to alanine 50 constitute a mitochondrion transit peptide. The interval alanine 47–lysine 66 is disordered. The span at glycine 56–lysine 66 shows a compositional bias: basic and acidic residues.

This sequence belongs to the universal ribosomal protein uL1 family.

It localises to the mitochondrion. In Bos taurus (Bovine), this protein is Large ribosomal subunit protein uL1m (MRPL1).